Consider the following 156-residue polypeptide: Small ribosomal subunit protein uS7 (156 aa).

It belongs to the universal ribosomal protein uS7 family. In terms of assembly, part of the 30S ribosomal subunit. Contacts proteins S9 and S11.

Its function is as follows. One of the primary rRNA binding proteins, it binds directly to 16S rRNA where it nucleates assembly of the head domain of the 30S subunit. Is located at the subunit interface close to the decoding center, probably blocks exit of the E-site tRNA. The protein is Small ribosomal subunit protein uS7 of Caldanaerobacter subterraneus subsp. tengcongensis (strain DSM 15242 / JCM 11007 / NBRC 100824 / MB4) (Thermoanaerobacter tengcongensis).